Consider the following 274-residue polypeptide: NH(3)-dependent NAD(+) synthetase (274 aa).

46–53 (GISGGQDS) provides a ligand contact to ATP. D52 serves as a coordination point for Mg(2+). R140 lines the deamido-NAD(+) pocket. Residue T160 participates in ATP binding. E165 contacts Mg(2+). Deamido-NAD(+) contacts are provided by K173 and D180. Residues K189 and T211 each contribute to the ATP site. A deamido-NAD(+)-binding site is contributed by 260–261 (HK).

The protein belongs to the NAD synthetase family. As to quaternary structure, homodimer.

The enzyme catalyses deamido-NAD(+) + NH4(+) + ATP = AMP + diphosphate + NAD(+) + H(+). The protein operates within cofactor biosynthesis; NAD(+) biosynthesis; NAD(+) from deamido-NAD(+) (ammonia route): step 1/1. Functionally, catalyzes the ATP-dependent amidation of deamido-NAD to form NAD. Uses ammonia as a nitrogen source. This Listeria monocytogenes serotype 4b (strain CLIP80459) protein is NH(3)-dependent NAD(+) synthetase.